The chain runs to 145 residues: Large ribosomal subunit protein uL15 (145 aa).

A disordered region spans residues 1-54 (MKLNELKYTPGSKKEATRVGRGMASGKGKTATRGHKGQNSRSGGGVRPGFEGGQ). Gly residues predominate over residues 42-52 (SGGGVRPGFEG).

It belongs to the universal ribosomal protein uL15 family. In terms of assembly, part of the 50S ribosomal subunit.

Functionally, binds to the 23S rRNA. This is Large ribosomal subunit protein uL15 from Mycoplasma capricolum subsp. capricolum (strain California kid / ATCC 27343 / NCTC 10154).